We begin with the raw amino-acid sequence, 105 residues long: Thioredoxin (105 aa).

Positions Val2–Met105 constitute a Thioredoxin domain. Residues Cys32 and Cys35 each act as nucleophile in the active site. A disulfide bond links Cys32 and Cys35. S-nitrosocysteine is present on residues Cys69 and Cys73.

This sequence belongs to the thioredoxin family. Post-translationally, may be nitrosylated on several cysteine residues, depending on the oxidation state. Nitrosylated Cys-73 may serve as donor for nitrosylation of target proteins.

It localises to the nucleus. The protein localises to the cytoplasm. The protein resides in the secreted. Its function is as follows. Participates in various redox reactions through the reversible oxidation of its active center dithiol to a disulfide and catalyzes dithiol-disulfide exchange reactions. Plays a role in the reversible S-nitrosylation of cysteine residues in target proteins, and thereby contributes to the response to intracellular nitric oxide. Nitrosylates the active site Cys of CASP3 in response to nitric oxide (NO), and thereby inhibits caspase-3 activity. Induces the FOS/JUN AP-1 DNA binding activity in ionizing radiation (IR) cells through its oxidation/reduction status and stimulates AP-1 transcriptional activity. The chain is Thioredoxin (TXN) from Ophiophagus hannah (King cobra).